The following is a 265-amino-acid chain: Polyprenol monophosphomannose synthase (265 aa).

Residues 1–10 (MSVPGEREQG) show a composition bias toward basic and acidic residues. The segment at 1 to 21 (MSVPGEREQGAGEDPATVRPT) is disordered.

The protein belongs to the glycosyltransferase 2 family. In terms of assembly, interacts with Lnt (also called Ppm2, AC A0QZ13) upon coexpression in E.coli, which increases the PPM synthase activity of this protein.

The protein localises to the cytoplasm. The catalysed reaction is a di-trans,poly-cis-dolichyl phosphate + GDP-alpha-D-mannose = a di-trans,poly-cis-dolichyl beta-D-mannosyl phosphate + GDP. Its function is as follows. Transfers mannose from GDP-mannose to lipid acceptors to form polyprenol monophosphomannose (PPM); catalytic activity in vitro is enhanced by Lnt (AC A0QZ13). PMM is an alkai-stable sugar donor which adds mannose-phosphate residues to triacylated-PIM2, eventually leading to generation of the cell wall glycolipid lipoglycan modulins lipoarabinomannan (LAM) and lipomannan (LM). The sequence is that of Polyprenol monophosphomannose synthase from Mycolicibacterium smegmatis (strain ATCC 700084 / mc(2)155) (Mycobacterium smegmatis).